Reading from the N-terminus, the 482-residue chain is PHD finger protein At3g20280 (482 aa).

The PHD-type zinc finger occupies Ala45–Ala97. 2 disordered regions span residues Thr188–Ser210 and Ser314–Ala482. The span at Ser314–Ser324 shows a compositional bias: low complexity. Composition is skewed to polar residues over residues Ala377–Pro386 and Gln393–Ser428. The span at Asp447–Ala482 shows a compositional bias: basic and acidic residues.

The polypeptide is PHD finger protein At3g20280 (Arabidopsis thaliana (Mouse-ear cress)).